The following is a 100-amino-acid chain: Urease subunit gamma (100 aa).

It belongs to the urease gamma subunit family. In terms of assembly, heterotrimer of UreA (gamma), UreB (beta) and UreC (alpha) subunits. Three heterotrimers associate to form the active enzyme.

The protein localises to the cytoplasm. The enzyme catalyses urea + 2 H2O + H(+) = hydrogencarbonate + 2 NH4(+). Its pathway is nitrogen metabolism; urea degradation; CO(2) and NH(3) from urea (urease route): step 1/1. The polypeptide is Urease subunit gamma (Enterobacter sp. (strain 638)).